Consider the following 271-residue polypeptide: Expansin-B1 (271 aa).

A signal peptide spans 1–24 (MQLFPVILPTLCVFLHLLISGSGS). The 112-residue stretch at 58-169 (GGACGYGSLV…RRTACKYRGK (112 aa)) folds into the Expansin-like EG45 domain. Cystine bridges form between cysteine 61/cysteine 90, cysteine 93/cysteine 164, and cysteine 98/cysteine 104. The Expansin-like CBD domain occupies 182–263 (YWLSLLIEYE…NWVPKATYTS (82 aa)). A glycan (N-linked (GlcNAc...) asparagine) is linked at asparagine 242.

It belongs to the expansin family. Expansin B subfamily.

Its subcellular location is the secreted. It localises to the cell wall. The protein localises to the membrane. In terms of biological role, may cause loosening and extension of plant cell walls by disrupting non-covalent bonding between cellulose microfibrils and matrix glucans. No enzymatic activity has been found. The sequence is that of Expansin-B1 (EXPB1) from Arabidopsis thaliana (Mouse-ear cress).